Here is a 532-residue protein sequence, read N- to C-terminus: Hepatocyte nuclear factor 1-beta-B (532 aa).

The dimerization stretch occupies residues 1–35 (MFTDMVSKLTSLQQELLSALLDSGVTKDVLVQALE). The 32-residue stretch at 5–36 (MVSKLTSLQQELLSALLDSGVTKDVLVQALED) folds into the HNF-p1 domain. Residues 74–95 (TGAQGKGGKLSGDEGSEDGDDF) are disordered. The POU-specific atypical domain maps to 102–197 (RELQSLNTEE…IDRQFDRVQG (96 aa)). The span at 222–231 (SSGAAGGSGA) shows a compositional bias: gly residues. 2 disordered regions span residues 222-245 (SSGA…KRMR) and 500-532 (EAGQ…LQAW). The segment at residues 244-324 (MRRNRFKWGP…NRRKEEAFRQ (81 aa)) is a DNA-binding region (homeobox; HNF1-type). Polar residues predominate over residues 505–532 (SHPSRYSTMDSSTITHLGSSKQCPLQAW).

The protein belongs to the HNF1 homeobox family. As to quaternary structure, binds DNA as a dimer. Can form homodimer or heterodimer with HNF1-alpha. First expressed at stage 10 in the intermediate mesoderm. Expressed in rhombomere r5 by 14 hpf with expression diminishing by 18 hpf.

It is found in the nucleus. Transcription factor that binds to the inverted palindrome 5'-GTTAATNATTAAC-3'. Acts downstream of hnf1ba but is not required for induction of rhombomere r5/r6 gene expression in the hindbrain. The protein is Hepatocyte nuclear factor 1-beta-B of Danio rerio (Zebrafish).